A 288-amino-acid polypeptide reads, in one-letter code: ATP synthase gamma chain (288 aa).

It belongs to the ATPase gamma chain family. In terms of assembly, F-type ATPases have 2 components, CF(1) - the catalytic core - and CF(0) - the membrane proton channel. CF(1) has five subunits: alpha(3), beta(3), gamma(1), delta(1), epsilon(1). CF(0) has three main subunits: a, b and c.

Its subcellular location is the cell inner membrane. Its function is as follows. Produces ATP from ADP in the presence of a proton gradient across the membrane. The gamma chain is believed to be important in regulating ATPase activity and the flow of protons through the CF(0) complex. The protein is ATP synthase gamma chain of Legionella pneumophila (strain Corby).